A 601-amino-acid polypeptide reads, in one-letter code: Beta-phellandrene synthase (601 aa).

A chloroplast-targeting transit peptide spans 1–35 (MSTISIHHVGILRNPLPSKNKRALINNPWSLSLPR). Positions 356 and 360 each coordinate Mn(2+). The short motif at 356 to 360 (DDVYD) is the DDXXD motif element. Homodimerization regions lie at residues 362-368 (YGTLDEL) and 434-471 (EAKW…LSIP). Mn(2+) is bound by residues D499 and E507.

This sequence belongs to the terpene synthase family. Homodimer. Requires Mn(2+) as cofactor. It depends on Mg(2+) as a cofactor. In terms of tissue distribution, expressed in peltate glandular trichomes. Present at low levels in flowers, leaves and stems.

The protein resides in the plastid. The protein localises to the chloroplast. The enzyme catalyses (2E)-geranyl diphosphate = beta-phellandrene + diphosphate. It carries out the reaction (2E)-geranyl diphosphate = (1R,5R)-sabinene + diphosphate. Its pathway is secondary metabolite biosynthesis; terpenoid biosynthesis. Its function is as follows. Involved in the biosynthesis of phenolic monoterpenes natural products. Monoterpene synthase that catalyzes mainly the formation of olefins such as sabinene and beta-phellandrene, and minor amounts of other monoterpenes (e.g. myrcene, gamma-terpinene, alpha-thujene and alpha-pinene) from geranyl diphosphate (GPP). The chain is Beta-phellandrene synthase from Origanum vulgare (Wild marjoram).